Here is a 184-residue protein sequence, read N- to C-terminus: ATP synthase subunit b, chloroplastic (184 aa).

The helical transmembrane segment at 27–49 (LATNPINLSVVFGVLIFFGKGVL) threads the bilayer.

It belongs to the ATPase B chain family. In terms of assembly, F-type ATPases have 2 components, F(1) - the catalytic core - and F(0) - the membrane proton channel. F(1) has five subunits: alpha(3), beta(3), gamma(1), delta(1), epsilon(1). F(0) has four main subunits: a(1), b(1), b'(1) and c(10-14). The alpha and beta chains form an alternating ring which encloses part of the gamma chain. F(1) is attached to F(0) by a central stalk formed by the gamma and epsilon chains, while a peripheral stalk is formed by the delta, b and b' chains.

The protein resides in the plastid. Its subcellular location is the chloroplast thylakoid membrane. F(1)F(0) ATP synthase produces ATP from ADP in the presence of a proton or sodium gradient. F-type ATPases consist of two structural domains, F(1) containing the extramembraneous catalytic core and F(0) containing the membrane proton channel, linked together by a central stalk and a peripheral stalk. During catalysis, ATP synthesis in the catalytic domain of F(1) is coupled via a rotary mechanism of the central stalk subunits to proton translocation. Functionally, component of the F(0) channel, it forms part of the peripheral stalk, linking F(1) to F(0). The protein is ATP synthase subunit b, chloroplastic of Arabidopsis thaliana (Mouse-ear cress).